Reading from the N-terminus, the 318-residue chain is Transaldolase (318 aa).

The Schiff-base intermediate with substrate role is filled by K131.

Belongs to the transaldolase family. Type 1 subfamily. As to quaternary structure, homodimer.

It is found in the cytoplasm. The enzyme catalyses D-sedoheptulose 7-phosphate + D-glyceraldehyde 3-phosphate = D-erythrose 4-phosphate + beta-D-fructose 6-phosphate. It participates in carbohydrate degradation; pentose phosphate pathway; D-glyceraldehyde 3-phosphate and beta-D-fructose 6-phosphate from D-ribose 5-phosphate and D-xylulose 5-phosphate (non-oxidative stage): step 2/3. Functionally, transaldolase is important for the balance of metabolites in the pentose-phosphate pathway. The chain is Transaldolase from Cellvibrio japonicus (strain Ueda107) (Pseudomonas fluorescens subsp. cellulosa).